Here is a 411-residue protein sequence, read N- to C-terminus: NAD-dependent dihydropyrimidine dehydrogenase subunit PreA (411 aa).

Substrate contacts are provided by residues Asn76 and 134–136 (NFS). Cys137 acts as the Nucleophile in catalysis. Position 201–202 (201–202 (NT)) interacts with substrate. 4Fe-4S ferredoxin-type domains lie at 335–367 (VYPR…WSEK) and 369–398 (RTPH…LGEV). Positions 344, 347, 350, 354, 378, 381, 384, and 388 each coordinate [4Fe-4S] cluster.

It belongs to the dihydropyrimidine dehydrogenase family. In terms of assembly, heterotetramer of 2 PreA and 2 PreT subunits. It depends on [4Fe-4S] cluster as a cofactor.

It carries out the reaction 5,6-dihydrouracil + NAD(+) = uracil + NADH + H(+). The enzyme catalyses 5,6-dihydrothymine + NAD(+) = thymine + NADH + H(+). Its function is as follows. Involved in pyrimidine base degradation. Catalyzes physiologically the reduction of uracil to 5,6-dihydrouracil (DHU) by using NADH as a specific cosubstrate. It also catalyzes the reverse reaction and the reduction of thymine to 5,6-dihydrothymine (DHT). The polypeptide is NAD-dependent dihydropyrimidine dehydrogenase subunit PreA (preA) (Escherichia coli O157:H7).